Reading from the N-terminus, the 268-residue chain is MAQPLCPPLSESWMLSAAWGPTRRPPPSDKDCGRSLVSSPDSWGSTPADSPVASPARPGTLRDPRAPSVGRRGARSSRLGSGQRQSASEREKLRMRTLARALHELRRFLPPSVAPAGQSLTKIETLRLAIRYIGHLSAVLGLSEESLQRRCRQRGDAGSPRGCPLCPDDCPAQMQTRTQAEGQGQGRGLGLVSAVRAGASWGSPPACPGARAAPEPRDPPALFAEAACPEGQAMEPSPPSPLLPGDVLALLETWMPLSPLEWLPEEPK.

The disordered stretch occupies residues 17–93 (AAWGPTRRPP…RQSASEREKL (77 aa)). A compositionally biased stretch (polar residues) spans 36-48 (LVSSPDSWGSTPA). Low complexity predominate over residues 66-86 (APSVGRRGARSSRLGSGQRQS). The bHLH domain occupies 82-136 (GQRQSASEREKLRMRTLARALHELRRFLPPSVAPAGQSLTKIETLRLAIRYIGHL). Positions 163 to 167 (CPLCP) match the CPLCP motif. 2 tandem repeats follow at residues 182-183 (GQ) and 184-185 (GQ). Residues 182-185 (GQGQ) form a 2 X 2 AA tandem repeats of G-Q region.

The protein resides in the nucleus. Transcription factor. Plays a role in the epithelialization of somitic mesoderm and in the development of cardiac mesoderm. Defines the rostrocaudal patterning of the somites by participating in distinct Notch pathways. In Homo sapiens (Human), this protein is Mesoderm posterior protein 1 (MESP1).